Here is a 307-residue protein sequence, read N- to C-terminus: Ribosomal RNA small subunit methyltransferase H (307 aa).

Residues 33 to 35 (GGY), Asp51, Phe78, Asp96, and Gln103 contribute to the S-adenosyl-L-methionine site.

It belongs to the methyltransferase superfamily. RsmH family.

It localises to the cytoplasm. It catalyses the reaction cytidine(1402) in 16S rRNA + S-adenosyl-L-methionine = N(4)-methylcytidine(1402) in 16S rRNA + S-adenosyl-L-homocysteine + H(+). In terms of biological role, specifically methylates the N4 position of cytidine in position 1402 (C1402) of 16S rRNA. The chain is Ribosomal RNA small subunit methyltransferase H from Rickettsia conorii (strain ATCC VR-613 / Malish 7).